The following is a 230-amino-acid chain: Orotidine 5'-phosphate decarboxylase (230 aa).

Residues Asp-10, Lys-32, 59-68 (DLKFHDIPRT), Thr-116, Arg-177, Gln-186, Gly-206, and Arg-207 contribute to the substrate site. Lys-61 acts as the Proton donor in catalysis.

This sequence belongs to the OMP decarboxylase family. Type 1 subfamily. In terms of assembly, homodimer.

It carries out the reaction orotidine 5'-phosphate + H(+) = UMP + CO2. It participates in pyrimidine metabolism; UMP biosynthesis via de novo pathway; UMP from orotate: step 2/2. Functionally, catalyzes the decarboxylation of orotidine 5'-monophosphate (OMP) to uridine 5'-monophosphate (UMP). This Methylacidiphilum infernorum (isolate V4) (Methylokorus infernorum (strain V4)) protein is Orotidine 5'-phosphate decarboxylase.